Reading from the N-terminus, the 260-residue chain is Glucosamine-6-phosphate deaminase (260 aa).

Catalysis depends on Asp-67, which acts as the Proton acceptor; for enolization step. The active-site For ring-opening step is Asp-136. The Proton acceptor; for ring-opening step role is filled by His-138. The active-site For ring-opening step is Glu-143.

Belongs to the glucosamine/galactosamine-6-phosphate isomerase family. NagB subfamily.

The enzyme catalyses alpha-D-glucosamine 6-phosphate + H2O = beta-D-fructose 6-phosphate + NH4(+). It functions in the pathway amino-sugar metabolism; N-acetylneuraminate degradation; D-fructose 6-phosphate from N-acetylneuraminate: step 5/5. Functionally, catalyzes the reversible isomerization-deamination of glucosamine 6-phosphate (GlcN6P) to form fructose 6-phosphate (Fru6P) and ammonium ion. This is Glucosamine-6-phosphate deaminase from Arthrobacter sp. (strain FB24).